Here is a 438-residue protein sequence, read N- to C-terminus: Xylose isomerase (438 aa).

Residues His-100 and Asp-103 contribute to the active site. Mg(2+) is bound by residues Glu-231, Glu-267, His-270, Asp-295, Asp-306, Asp-308, and Asp-338.

It belongs to the xylose isomerase family. As to quaternary structure, homotetramer. It depends on Mg(2+) as a cofactor.

It localises to the cytoplasm. The enzyme catalyses alpha-D-xylose = alpha-D-xylulofuranose. The polypeptide is Xylose isomerase (xylA) (Thermoanaerobacter pseudethanolicus (strain ATCC 33223 / 39E) (Clostridium thermohydrosulfuricum)).